The sequence spans 456 residues: UPF0210 protein Dde_3704 (456 aa).

The protein belongs to the UPF0210 family. In terms of assembly, homodimer.

The protein is UPF0210 protein Dde_3704 of Oleidesulfovibrio alaskensis (strain ATCC BAA-1058 / DSM 17464 / G20) (Desulfovibrio alaskensis).